A 425-amino-acid chain; its full sequence is Histidine--tRNA ligase 1 (425 aa).

The protein belongs to the class-II aminoacyl-tRNA synthetase family. In terms of assembly, homodimer.

The protein resides in the cytoplasm. It catalyses the reaction tRNA(His) + L-histidine + ATP = L-histidyl-tRNA(His) + AMP + diphosphate + H(+). This Bacillus anthracis protein is Histidine--tRNA ligase 1.